The sequence spans 24 residues: Small ribosomal subunit protein uS19 (24 aa).

The segment at lysine 1–lysine 24 is disordered. Residues tyrosine 11 to lysine 24 are compositionally biased toward basic residues.

This sequence belongs to the universal ribosomal protein uS19 family.

Its function is as follows. Protein S19 forms a complex with S13 that binds strongly to the 16S ribosomal RNA. This is Small ribosomal subunit protein uS19 from Phytoplasma sp. (strain STRAWB2).